The sequence spans 602 residues: UvrABC system protein C (602 aa).

A GIY-YIG domain is found at 17-94 (KTSGCYKMYS…IKKYKPTYNI (78 aa)). One can recognise a UVR domain in the interval 199–234 (SKLLNDIEIKMKEVIMKENFEAAIKLKETKKSLIEI).

It belongs to the UvrC family. Interacts with UvrB in an incision complex.

The protein resides in the cytoplasm. Its function is as follows. The UvrABC repair system catalyzes the recognition and processing of DNA lesions. UvrC both incises the 5' and 3' sides of the lesion. The N-terminal half is responsible for the 3' incision and the C-terminal half is responsible for the 5' incision. The chain is UvrABC system protein C from Borrelia duttonii (strain Ly).